Here is a 912-residue protein sequence, read N- to C-terminus: DNA ligase 4 (912 aa).

Residues E276, T277, K278, L279, R283, E336, K350, F372, E432, K437, K454, and K456 each contribute to the ATP site. The N6-AMP-lysine intermediate role is filled by K278. E336 contributes to the Mg(2+) binding site. Position 432 (E432) interacts with Mg(2+). A required for catalytic activity region spans residues 615-625 (LASKHLYIDEY). 2 BRCT domains span residues 659-748 (KVSS…PAFM) and 809-912 (CKLC…QFLI).

The protein belongs to the ATP-dependent DNA ligase family. Interacts with XRCC4; the LIG4-XRCC4 subcomplex has a 1:2 stoichiometry. Component of the core long-range non-homologous end joining (NHEJ) complex (also named DNA-PK complex) composed of PRKDC, LIG4, XRCC4, XRCC6/Ku70, XRCC5/Ku86 and NHEJ1/XLF. Additional component of the NHEJ complex includes PAXX. Following autophosphorylation, PRKDC dissociates from DNA, leading to formation of the short-range NHEJ complex, composed of LIG4, XRCC4, XRCC6/Ku70, XRCC5/Ku86 and NHEJ1/XLF. Mg(2+) serves as cofactor.

The protein resides in the nucleus. The catalysed reaction is ATP + (deoxyribonucleotide)n-3'-hydroxyl + 5'-phospho-(deoxyribonucleotide)m = (deoxyribonucleotide)n+m + AMP + diphosphate.. In terms of biological role, DNA ligase involved in DNA non-homologous end joining (NHEJ); required for double-strand break (DSB) repair and V(D)J recombination. Catalyzes the NHEJ ligation step of the broken DNA during DSB repair by resealing the DNA breaks after the gap filling is completed. Joins single-strand breaks in a double-stranded polydeoxynucleotide in an ATP-dependent reaction. LIG4 is mechanistically flexible: it can ligate nicks as well as compatible DNA overhangs alone, while in the presence of XRCC4, it can ligate ends with 2-nucleotides (nt) microhomology and 1-nt gaps. Forms a subcomplex with XRCC4; the LIG4-XRCC4 subcomplex is responsible for the NHEJ ligation step and XRCC4 enhances the joining activity of LIG4. This chain is DNA ligase 4, found in Gallus gallus (Chicken).